A 197-amino-acid chain; its full sequence is Probable deoxycytidylate deaminase (197 aa).

Residues 49–183 form the CMP/dCMP-type deaminase domain; the sequence is KKHQRFLRIA…KMLDHARLPY (135 aa). H117 contributes to the Zn(2+) binding site. The active-site Proton donor is E119. Zn(2+)-binding residues include C143 and C146.

This sequence belongs to the cytidine and deoxycytidylate deaminase family. Requires Zn(2+) as cofactor.

The catalysed reaction is dCMP + H2O + H(+) = dUMP + NH4(+). Functionally, supplies the nucleotide substrate for thymidylate synthetase. The sequence is that of Probable deoxycytidylate deaminase from Caenorhabditis elegans.